A 419-amino-acid chain; its full sequence is UDP-N-acetylglucosamine 1-carboxyvinyltransferase (419 aa).

A phosphoenolpyruvate-binding site is contributed by 22-23 (KN). Arginine 93 serves as a coordination point for UDP-N-acetyl-alpha-D-glucosamine. The active-site Proton donor is cysteine 117. 2-(S-cysteinyl)pyruvic acid O-phosphothioketal is present on cysteine 117. Positions 307 and 329 each coordinate UDP-N-acetyl-alpha-D-glucosamine.

It belongs to the EPSP synthase family. MurA subfamily.

The protein resides in the cytoplasm. The catalysed reaction is phosphoenolpyruvate + UDP-N-acetyl-alpha-D-glucosamine = UDP-N-acetyl-3-O-(1-carboxyvinyl)-alpha-D-glucosamine + phosphate. Its pathway is cell wall biogenesis; peptidoglycan biosynthesis. Its function is as follows. Cell wall formation. Adds enolpyruvyl to UDP-N-acetylglucosamine. In Shewanella piezotolerans (strain WP3 / JCM 13877), this protein is UDP-N-acetylglucosamine 1-carboxyvinyltransferase.